A 503-amino-acid chain; its full sequence is uncharacterized protein (503 aa).

Disordered stretches follow at residues 1 to 26 (MADD…SPTT) and 132 to 156 (DQQQ…DNSM). Residues 16 to 26 (AQSSVPTSPTT) show a composition bias toward low complexity. The span at 147–156 (TPNSVDDNSM) shows a compositional bias: polar residues.

This is an uncharacterized protein from Caenorhabditis elegans.